Here is a 129-residue protein sequence, read N- to C-terminus: Small ribosomal subunit protein uS11 (129 aa).

The protein belongs to the universal ribosomal protein uS11 family. As to quaternary structure, part of the 30S ribosomal subunit. Interacts with proteins S7 and S18. Binds to IF-3.

Located on the platform of the 30S subunit, it bridges several disparate RNA helices of the 16S rRNA. Forms part of the Shine-Dalgarno cleft in the 70S ribosome. The polypeptide is Small ribosomal subunit protein uS11 (Vibrio campbellii (strain ATCC BAA-1116)).